Here is a 137-residue protein sequence, read N- to C-terminus: Large ribosomal subunit protein uL16 (137 aa).

The protein belongs to the universal ribosomal protein uL16 family. As to quaternary structure, part of the 50S ribosomal subunit.

Functionally, binds 23S rRNA and is also seen to make contacts with the A and possibly P site tRNAs. This Chlamydia abortus (strain DSM 27085 / S26/3) (Chlamydophila abortus) protein is Large ribosomal subunit protein uL16.